The chain runs to 358 residues: DNA methyltransferase CcrM (358 aa).

The tract at residues 1–260 (MKFGPETIIH…AKVVPIAPED (260 aa)) is methyltransferase. 2 consecutive DNA-binding regions (target strand DNA) follow at residues 31–34 (DPPY) and 39–45 (GGDLLRP). 2 consecutive DNA-binding regions (non-target strand DNA) follow at residues 93–94 (YH) and 109–110 (WI). Histidine 94 lines the dsDNA pocket. Residues 122–132 (MPNFKGTRFAN) constitute a DNA-binding region (target strand DNA). Positions 153-157 (YDALK) form a DNA-binding region, non-target strand DNA. Glutamine 164 and arginine 179 together coordinate dsDNA. A DNA-binding region (target strand DNA) is located at residues 187–193 (KAHPTQK). In terms of domain architecture, RAMA spans 259-355 (EDLDVMGSKR…IDVLRAQVRA (97 aa)). The segment at 261 to 270 (LDVMGSKRAE) is linker. 2 residues coordinate dsDNA: lysine 267 and arginine 272. The non-specific DNA-binding stretch occupies residues 272–358 (RVPFGTIVEA…LRAQVRAGMN (87 aa)). 2 DNA-binding regions (non-target strand DNA) span residues 315–317 (SIH) and 330–332 (NGW). Residue arginine 350 coordinates dsDNA.

This sequence belongs to the N(4)/N(6)-methyltransferase family. Homodimer. Post-translationally, rapidly degraded by Lon protease prior to cell division.

It carries out the reaction a 2'-deoxyadenosine in DNA + S-adenosyl-L-methionine = an N(6)-methyl-2'-deoxyadenosine in DNA + S-adenosyl-L-homocysteine + H(+). A beta subtype methylase that recognizes the double-stranded sequence 5'-GANTC-3' and methylates non-modifed A-2 on the hemimethylated, post-replicative DNA. Opens a bubble in the DNA at the recognition site, allowing precise recognition of the sequence and ensuring enzyme specificity. Functions only in the predivisional cell. Responsible for 5'-GANTC-3' methylation in the cell; methylation of hemimethylated sites generated after replication fork passage occurs late in the predivisional cell, near completion of chromosome replication but prior to cell division. Contributes to the accurate cell-cycle control of DNA replication and cellular morphology. The chain is DNA methyltransferase CcrM (ccrMIM) from Caulobacter vibrioides (strain ATCC 19089 / CIP 103742 / CB 15) (Caulobacter crescentus).